Consider the following 271-residue polypeptide: (21S)-21-acetoxyl-apo-melianone synthase SDR (271 aa).

The active-site Proton donor is the Ser-150. Tyr-163 serves as the catalytic Proton acceptor. The active-site Proton donor/acceptor is Lys-167.

Belongs to the short-chain dehydrogenases/reductases (SDR) family. Mainly expressed in petioles.

The catalysed reaction is 21-O-acetyl-isomeliandiol + A = (21S)-21-acetoxyl-apo-melianone + AH2. Its pathway is secondary metabolite biosynthesis; terpenoid biosynthesis. In terms of biological role, oxidoreductase involved in the biosynthesis of limonoids triterpene natural products such as azadirachtin, an antifeedant widely used as bioinsecticide, and possessing many medicinal applications including anti-tumoral, anti-malarial, anti-rheumatic, antibacterial, anti-inflammatory, anti-pyretic and diuretic effects. Catalyzes the oxidation of 21-O-acetyl-isomeliandiol to (21S)-21-acetoxyl-apo-melianone. This is (21S)-21-acetoxyl-apo-melianone synthase SDR from Melia azedarach (Chinaberry tree).